A 439-amino-acid polypeptide reads, in one-letter code: Argininosuccinate lyase (439 aa).

This sequence belongs to the lyase 1 family. Argininosuccinate lyase subfamily.

It is found in the cytoplasm. The enzyme catalyses 2-(N(omega)-L-arginino)succinate = fumarate + L-arginine. It participates in amino-acid biosynthesis; L-arginine biosynthesis; L-arginine from L-ornithine and carbamoyl phosphate: step 3/3. This is Argininosuccinate lyase from Caldanaerobacter subterraneus subsp. tengcongensis (strain DSM 15242 / JCM 11007 / NBRC 100824 / MB4) (Thermoanaerobacter tengcongensis).